We begin with the raw amino-acid sequence, 702 residues long: MNHTHETIIAGRPMKVEFGKLGMLSDAAILMSYGDTVILTNVNASEKPREGIDFFPLSVEYEERLYSVGKIPGGFIKREGKPSEKAILNGRAIDRPLRPLFPKGYRNDVQVVCTVVSVENDNLPEILAINAASMALCLSSIPFTTPVAAVQVGLIGEEFILNPTSKEREESSLQLTVCATKERVMMIEAGGDEIPEDTMINAIKFGFDKCQDIIKFQEEAVSMFGKEKKVPELHKVPEEIEEAVREFAFDMISESMHITDRDERNAAMDEVKAKINEEFEEKYPDNMSDIGEAVYDMQKEVVRHMLLKEGKRPDGRAFDEVRNIGCEVGLLPRTHGTGLFTRGLTQVMTVATLGSISEIQILDGIGEEESKRYMHHYNFPAYSVGEVRPLRGPGRREIGHGALAERALEPLIPSEAKFPYTIRLVSEVLSSNGSTSQASVCGSTLALLDAGVPIKRPAAGIAMGLITSKDLTEEEVLTDIQGLEDFFGDMDFKVAGTEEGITSIQVDTKIKGLSEKVIHDAIYGARKARLMILDKIKECIPAPREEVSKYAPKTSTLQIDPEKIRDVIGAGGKVINKIIADTGVKIDIKEDGLVYVSSAESEGVKEAVKIIEGLTKEVKAGEIYLGKVTKIAQFGAFVEVLPNKEGLVHISKLDNKRVEKVEDVVSVGDEILVKVTEIDSQGRINLSRKDAIKEAEEENKQQ.

Asp-485 and Asp-491 together coordinate Mg(2+). Positions 552 to 611 (PKTSTLQIDPEKIRDVIGAGGKVINKIIADTGVKIDIKEDGLVYVSSAESEGVKEAVKII) constitute a KH domain. An S1 motif domain is found at 621 to 689 (GEIYLGKVTK…SQGRINLSRK (69 aa)).

Belongs to the polyribonucleotide nucleotidyltransferase family. The cofactor is Mg(2+).

It is found in the cytoplasm. It catalyses the reaction RNA(n+1) + phosphate = RNA(n) + a ribonucleoside 5'-diphosphate. In terms of biological role, involved in mRNA degradation. Catalyzes the phosphorolysis of single-stranded polyribonucleotides processively in the 3'- to 5'-direction. The protein is Polyribonucleotide nucleotidyltransferase of Clostridium perfringens (strain ATCC 13124 / DSM 756 / JCM 1290 / NCIMB 6125 / NCTC 8237 / Type A).